A 226-amino-acid polypeptide reads, in one-letter code: ATP synthase F(0) complex subunit a (226 aa).

The next 6 membrane-spanning stretches (helical) occupy residues 12-32 (PTVL…LLVP), 68-88 (WSLM…LGLF), 97-117 (QLSM…AMGL), 138-158 (IPML…ALAV), 164-184 (ITAG…MLTI), and 189-209 (TLIT…VALI).

It belongs to the ATPase A chain family. Component of the ATP synthase complex composed at least of ATP5F1A/subunit alpha, ATP5F1B/subunit beta, ATP5MC1/subunit c (homooctomer), MT-ATP6/subunit a, MT-ATP8/subunit 8, ATP5ME/subunit e, ATP5MF/subunit f, ATP5MG/subunit g, ATP5MK/subunit k, ATP5MJ/subunit j, ATP5F1C/subunit gamma, ATP5F1D/subunit delta, ATP5F1E/subunit epsilon, ATP5PF/subunit F6, ATP5PB/subunit b, ATP5PD/subunit d, ATP5PO/subunit OSCP. ATP synthase complex consists of a soluble F(1) head domain (subunits alpha(3) and beta(3)) - the catalytic core - and a membrane F(0) domain - the membrane proton channel (subunits c, a, 8, e, f, g, k and j). These two domains are linked by a central stalk (subunits gamma, delta, and epsilon) rotating inside the F1 region and a stationary peripheral stalk (subunits F6, b, d, and OSCP). Interacts with DNAJC30; interaction is direct.

Its subcellular location is the mitochondrion inner membrane. It catalyses the reaction H(+)(in) = H(+)(out). Its function is as follows. Subunit a, of the mitochondrial membrane ATP synthase complex (F(1)F(0) ATP synthase or Complex V) that produces ATP from ADP in the presence of a proton gradient across the membrane which is generated by electron transport complexes of the respiratory chain. ATP synthase complex consist of a soluble F(1) head domain - the catalytic core - and a membrane F(1) domain - the membrane proton channel. These two domains are linked by a central stalk rotating inside the F(1) region and a stationary peripheral stalk. During catalysis, ATP synthesis in the catalytic domain of F(1) is coupled via a rotary mechanism of the central stalk subunits to proton translocation. With the subunit c (ATP5MC1), forms the proton-conducting channel in the F(0) domain, that contains two crucial half-channels (inlet and outlet) that facilitate proton movement from the mitochondrial intermembrane space (IMS) into the matrix. Protons are taken up via the inlet half-channel and released through the outlet half-channel, following a Grotthuss mechanism. This Pongo pygmaeus (Bornean orangutan) protein is ATP synthase F(0) complex subunit a.